The primary structure comprises 206 residues: Protein-methionine-sulfoxide reductase heme-binding subunit MsrQ (206 aa).

Transmembrane regions (helical) follow at residues 10 to 30, 42 to 62, 75 to 95, 110 to 130, 147 to 167, and 169 to 189; these read VFIA…SAVL, LGLG…LQKL, LGLW…VFVL, PYII…VTSN, LVYV…RADL, and EWAI…PPVM.

Belongs to the MsrQ family. Heterodimer of a catalytic subunit (MsrP) and a heme-binding subunit (MsrQ). FMN serves as cofactor. The cofactor is heme b.

The protein resides in the cell inner membrane. Part of the MsrPQ system that repairs oxidized periplasmic proteins containing methionine sulfoxide residues (Met-O), using respiratory chain electrons. Thus protects these proteins from oxidative-stress damage caused by reactive species of oxygen and chlorine generated by the host defense mechanisms. MsrPQ is essential for the maintenance of envelope integrity under bleach stress, rescuing a wide series of structurally unrelated periplasmic proteins from methionine oxidation. MsrQ provides electrons for reduction to the reductase catalytic subunit MsrP, using the quinone pool of the respiratory chain. This is Protein-methionine-sulfoxide reductase heme-binding subunit MsrQ from Pseudomonas fluorescens (strain SBW25).